We begin with the raw amino-acid sequence, 401 residues long: MDSSADPRNASNCTDPFSPSSMCSPVPSPSSWVNFSHLEGNLSDPCIRNRTELGGSDSLCPPTGSPSMVTAITIMALYSIVCVVGLFGNFLVMYVIVRYTKMKTATNIYIFNLALADALATSTLPFQSVNYLMGTWPFGTILCKIVISIDYYNMFTSIFTLCTMSVDRYIAVCHPVKALDFRTPRNAKIINVCNWILSSAIGLPVMFMATTKYRNGSIDCALTFSHPTWYWENLLKICVFIFAFIMPVLIITVCYGLMILRLKSVRMLSGSKEKDRNLRRITRMVLVVVAVFIVCWTPIHIYVIIKALITIPETTFQTVSWHFCIALGYTNSCLNPVLYAFLDENFKRCFREFCIPTSSTIEQQNSARIRQNTRDHPSTANTVDRTNHQLENLEAETAPLP.

Residues 1-69 (MDSSADPRNA…CPPTGSPSMV (69 aa)) are Extracellular-facing. 5 N-linked (GlcNAc...) asparagine glycosylation sites follow: N9, N12, N34, N41, and N49. Residues 70 to 94 (TAITIMALYSIVCVVGLFGNFLVMY) form a helical membrane-spanning segment. Topologically, residues 95 to 107 (VIVRYTKMKTATN) are cytoplasmic. The helical transmembrane segment at 108 to 132 (IYIFNLALADALATSTLPFQSVNYL) threads the bilayer. Residues 133–143 (MGTWPFGTILC) are Extracellular-facing. An intrachain disulfide couples C143 to C220. A helical transmembrane segment spans residues 144–166 (KIVISIDYYNMFTSIFTLCTMSV). Residues 167–186 (DRYIAVCHPVKALDFRTPRN) lie on the Cytoplasmic side of the membrane. The residue at position 169 (Y169) is a Phosphotyrosine. The helical transmembrane segment at 187 to 208 (AKIINVCNWILSSAIGLPVMFM) threads the bilayer. The Extracellular segment spans residues 209-231 (ATTKYRNGSIDCALTFSHPTWYW). The helical transmembrane segment at 232-256 (ENLLKICVFIFAFIMPVLIITVCYG) threads the bilayer. At 257 to 280 (LMILRLKSVRMLSGSKEKDRNLRR) the chain is on the cytoplasmic side. Residues 281-307 (ITRMVLVVVAVFIVCWTPIHIYVIIKA) form a helical membrane-spanning segment. The Extracellular portion of the chain corresponds to 308-315 (LITIPETT). A helical transmembrane segment spans residues 316–339 (FQTVSWHFCIALGYTNSCLNPVLY). An NPxxY; plays a role in stabilizing the activated conformation of the receptor motif is present at residues 335-339 (NPVLY). Topologically, residues 340–401 (AFLDENFKRC…NLEAETAPLP (62 aa)) are cytoplasmic. C354 carries S-palmitoyl cysteine lipidation. The disordered stretch occupies residues 365–385 (NSARIRQNTRDHPSTANTVDR). S366 carries the phosphoserine modification. T373 carries the phosphothreonine modification. A Phosphoserine modification is found at S378. T397 carries the phosphothreonine modification.

It belongs to the G-protein coupled receptor 1 family. In terms of assembly, forms homooligomers and heterooligomers with other GPCRs, such as OPRD1, OPRK1, OPRL1, NPFFR2, ADRA2A, SSTR2, CNR1 and CCR5 (probably in dimeric forms). Interacts with heterotrimeric G proteins; interaction with a heterotrimeric complex containing GNAI1, GNB1 and GNG2 stabilizes the active conformation of the receptor and increases its affinity for endomorphin-2, the synthetic opioid peptide DAMGO and for morphinan agonists. Interacts with PPL; the interaction disrupts agonist-mediated G-protein activation. Interacts (via C-terminus) with DNAJB4 (via C-terminus). Interacts with calmodulin; the interaction inhibits the constitutive activity of OPRM1; it abolishes basal and attenuates agonist-stimulated G-protein coupling. Interacts with FLNA, PLD2, RANBP9 and WLS and GPM6A. Interacts with RTP4. Interacts with SYP and GNAS. Interacts with RGS9, RGS17, RGS20, RGS4, PPP1R9B and HINT1. Phosphorylated. Differentially phosphorylated in basal and agonist-induced conditions. Agonist-mediated phosphorylation modulates receptor internalization. Phosphorylated by GRK2 in a agonist-dependent manner. Phosphorylation at Tyr-169 requires receptor activation, is dependent on non-receptor protein tyrosine kinase Src and results in a decrease in agonist efficacy by reducing G-protein coupling efficiency. Phosphorylated on tyrosine residues; the phosphorylation is involved in agonist-induced G-protein-independent receptor down-regulation. Phosphorylation at Ser-378 is involved in G-protein-dependent but not beta-arrestin-dependent activation of the ERK pathway. Post-translationally, ubiquitinated. A basal ubiquitination seems not to be related to degradation. Ubiquitination is increased upon formation of OPRM1:OPRD1 oligomers leading to proteasomal degradation; the ubiquitination is diminished by RTP4.

It is found in the cell membrane. The protein resides in the cell projection. Its subcellular location is the axon. The protein localises to the perikaryon. It localises to the dendrite. It is found in the endosome. Receptor for endogenous opioids such as beta-endorphin and endomorphin. Receptor for natural and synthetic opioids including morphine, heroin, DAMGO, fentanyl, etorphine, buprenorphin and methadone. Also activated by enkephalin peptides, such as Met-enkephalin or Met-enkephalin-Arg-Phe, with higher affinity for Met-enkephalin-Arg-Phe. Agonist binding to the receptor induces coupling to an inactive GDP-bound heterotrimeric G-protein complex and subsequent exchange of GDP for GTP in the G-protein alpha subunit leading to dissociation of the G-protein complex with the free GTP-bound G-protein alpha and the G-protein beta-gamma dimer activating downstream cellular effectors. The agonist- and cell type-specific activity is predominantly coupled to pertussis toxin-sensitive G(i) and G(o) G alpha proteins, GNAI1, GNAI2, GNAI3 and GNAO1, and to a lesser extent to pertussis toxin-insensitive G alpha proteins GNAZ and GNA15. They mediate an array of downstream cellular responses, including inhibition of adenylate cyclase activity and both N-type and L-type calcium channels, activation of inward rectifying potassium channels, mitogen-activated protein kinase (MAPK), phospholipase C (PLC), phosphoinositide/protein kinase (PKC), phosphoinositide 3-kinase (PI3K) and regulation of NF-kappa-B. Also couples to adenylate cyclase stimulatory G alpha proteins. The selective temporal coupling to G-proteins and subsequent signaling can be regulated by RGSZ proteins, such as RGS9, RGS17 and RGS4. Phosphorylation by members of the GPRK subfamily of Ser/Thr protein kinases and association with beta-arrestins is involved in short-term receptor desensitization. Beta-arrestins associate with the GPRK-phosphorylated receptor and uncouple it from the G-protein thus terminating signal transduction. The phosphorylated receptor is internalized through endocytosis via clathrin-coated pits which involves beta-arrestins. The activation of the ERK pathway occurs either in a G-protein-dependent or a beta-arrestin-dependent manner and is regulated by agonist-specific receptor phosphorylation. Acts as a class A G-protein coupled receptor (GPCR) which dissociates from beta-arrestin at or near the plasma membrane and undergoes rapid recycling. Receptor down-regulation pathways are varying with the agonist and occur dependent or independent of G-protein coupling. Endogenous ligands induce rapid desensitization, endocytosis and recycling. Heterooligomerization with other GPCRs can modulate agonist binding, signaling and trafficking properties. Involved in neurogenesis. The protein is Mu-type opioid receptor (OPRM1) of Sus scrofa (Pig).